We begin with the raw amino-acid sequence, 323 residues long: MDPKYQRVALNDGHFMPVLGFGTYAPPEVPRNRVVEVTKLAIEAGFRHIDSAYLYNNEEQVGLAIRSKIADGSVKREDIFYTSKLWCTFFRPQLVQPALESSLKKLQLDYVDLYLIHFPMALKPGETPLPKDENGKVMFDTVDLCAIWEAMEKCKDAGLAKSIGVSNFNRRQLEMILNNPGLKYKPVCNQVECHPYLNQSKLLDFCKSKDIVLVAHSALGTQRHKLWVDQNSPALLEDPVLCALAKKHKRSPALIALRYQLQRGVVVLAKSYNEQRIRENVQVFEFQLTSEDMKVLDDLNRNFRYVVMDFLVDHPDYPFSDEY.

NADP(+) contacts are provided by residues 20-24 (GFGTY) and Asp50. Tyr55 (proton donor) is an active-site residue. Residue His117 coordinates substrate. NADP(+) contacts are provided by residues 166-167 (SN), Gln190, 216-221 (HSALGT), and 270-280 (KSYNEQRIREN).

The protein belongs to the aldo/keto reductase family. Monomer.

The protein localises to the cytoplasm. Its subcellular location is the cytosol. It catalyses the reaction chlordecone alcohol + NADP(+) = chlordecone + NADPH + H(+). The enzyme catalyses a 3alpha-hydroxysteroid + NADP(+) = a 3-oxosteroid + NADPH + H(+). It carries out the reaction a 3alpha-hydroxysteroid + NAD(+) = a 3-oxosteroid + NADH + H(+). The catalysed reaction is 5alpha-androstane-3alpha,17beta-diol + NADP(+) = 17beta-hydroxy-5alpha-androstan-3-one + NADPH + H(+). It catalyses the reaction 5alpha-androstane-3beta,17beta-diol + NADP(+) = 17beta-hydroxy-5alpha-androstan-3-one + NADPH + H(+). The enzyme catalyses 5alpha-androstane-3alpha,17beta-diol + NAD(+) = 17beta-hydroxy-5alpha-androstan-3-one + NADH + H(+). It carries out the reaction 17beta-estradiol + NADP(+) = estrone + NADPH + H(+). The catalysed reaction is 17beta-estradiol + NAD(+) = estrone + NADH + H(+). It catalyses the reaction (20S)-hydroxypregn-4-en-3-one + NADP(+) = progesterone + NADPH + H(+). The enzyme catalyses (20S)-hydroxypregn-4-en-3-one + NAD(+) = progesterone + NADH + H(+). It carries out the reaction androsterone + NADP(+) = 5alpha-androstan-3,17-dione + NADPH + H(+). The catalysed reaction is testosterone + NADP(+) = androst-4-ene-3,17-dione + NADPH + H(+). It catalyses the reaction testosterone + NAD(+) = androst-4-ene-3,17-dione + NADH + H(+). The enzyme catalyses 3alpha-hydroxy-5alpha-androstane 17-O-(beta-D-glucuronate) + NADP(+) = 5alpha-dihydrotestosterone 17-O-(beta-D-glucuronate) + NADPH + H(+). It carries out the reaction (3beta,5alpha,17beta)-3-hydroxy-androstan-17-yl sulfate + NADP(+) = 5alpha-dihydrotestosterone sulfate + NADPH + H(+). The catalysed reaction is 5alpha-androstane-3alpha,17beta-diol + NAD(+) = androsterone + NADH + H(+). The protein operates within steroid metabolism. Its function is as follows. Cytosolic aldo-keto reductase that catalyzes the NADH and NADPH-dependent reduction of ketosteroids to hydroxysteroids. Liver specific enzyme that acts as an NAD(P)(H)-dependent 3-, 17- and 20-ketosteroid reductase on the steroid nucleus and side chain. Displays the ability to catalyze both oxidation and reduction in vitro, but most probably acts as a reductase in vivo since the oxidase activity measured in vitro is inhibited by physiological concentration of NADPH. Acts preferentially as a 3-alpha-hydroxysteroid dehydrogenase (HSD) with a subsidiary 3-beta-HSD activity. Catalyzes efficiently the transformation of the potent androgen 5-alpha-dihydrotestosterone (5alpha-DHT or 17beta-hydroxy-5alpha-androstan-3-one) into the less active form, 5-alpha-androstan-3-alpha,17-beta-diol (3-alpha-diol). Catalyzes the reduction of estrone into 17beta-estradiol but with low efficiency. Metabolizes a broad spectrum of natural and synthetic therapeutic steroid and plays an important role in metabolism of androgens, estrogens, progestereone and conjugated steroids. Catalyzes the biotransformation of the pesticide chlordecone (kepone) to its corresponding alcohol leading to increased biliary excretion of the pesticide and concomitant reduction of its neurotoxicity since bile is the major excretory route. The protein is Aldo-keto reductase family 1 member C4 (AKR1C4) of Macaca fascicularis (Crab-eating macaque).